A 217-amino-acid polypeptide reads, in one-letter code: Holliday junction branch migration complex subunit RuvA (217 aa).

The segment at 1 to 64 (MIGKLTGILD…EDAIRLFGFE (64 aa)) is domain I. A domain II region spans residues 65–145 (TKVEQDWFCL…NAPHQSMPHF (81 aa)). A flexible linker region spans residues 146-160 (VSYSSETSSQAGTQH). The segment at 161–217 (TGHQHSMDALAALTKLGFERDQATHALQEAIKAFEGETPSSALLIRHSLKLLSSHLK) is domain III.

It belongs to the RuvA family. Homotetramer. Forms an RuvA(8)-RuvB(12)-Holliday junction (HJ) complex. HJ DNA is sandwiched between 2 RuvA tetramers; dsDNA enters through RuvA and exits via RuvB. An RuvB hexamer assembles on each DNA strand where it exits the tetramer. Each RuvB hexamer is contacted by two RuvA subunits (via domain III) on 2 adjacent RuvB subunits; this complex drives branch migration. In the full resolvosome a probable DNA-RuvA(4)-RuvB(12)-RuvC(2) complex forms which resolves the HJ.

Its subcellular location is the cytoplasm. Its function is as follows. The RuvA-RuvB-RuvC complex processes Holliday junction (HJ) DNA during genetic recombination and DNA repair, while the RuvA-RuvB complex plays an important role in the rescue of blocked DNA replication forks via replication fork reversal (RFR). RuvA specifically binds to HJ cruciform DNA, conferring on it an open structure. The RuvB hexamer acts as an ATP-dependent pump, pulling dsDNA into and through the RuvAB complex. HJ branch migration allows RuvC to scan DNA until it finds its consensus sequence, where it cleaves and resolves the cruciform DNA. The protein is Holliday junction branch migration complex subunit RuvA of Bartonella bacilliformis (strain ATCC 35685 / KC583 / Herrer 020/F12,63).